Consider the following 562-residue polypeptide: Adenylate kinase isoenzyme 5 (562 aa).

2 adenylate kinase regions span residues 133–316 (KIIL…MAVD) and 377–559 (KIIF…TAID). Residue 142 to 147 (GSGKGT) coordinates ATP. The interval 162–193 (SVGELLRKKIHSTSSNRKWSLIAKIITTGELA) is NMP 1. Residues Arg-168, 191–193 (ELA), 219–222 (GFPR), and Gln-226 each bind AMP. Residues 256–266 (KRAEQQGRPDD) form an LID 1 region. Arg-257 is an ATP binding site. The AMP site is built by Arg-263 and Arg-274. 386-391 (GSGKGT) lines the ATP pocket. Residues 406 to 435 (STGELLREELASESERSKLIRDIMERGDLV) form an NMP 2 region. Residues Thr-407, Arg-412, 433–435 (DLV), 462–465 (GYPR), and Gln-469 contribute to the AMP site. Residues 499–509 (QRSRSSLPVDD) form an LID 2 region. Arg-500 contributes to the ATP binding site. Arg-517 contacts AMP. Gly-545 contacts ATP.

Belongs to the adenylate kinase family. As to quaternary structure, monomer. Interacts with YWHAZ. As to expression, brain specific.

It is found in the cytoplasm. It catalyses the reaction AMP + ATP = 2 ADP. The catalysed reaction is a 2'-deoxyribonucleoside 5'-diphosphate + ATP = a 2'-deoxyribonucleoside 5'-triphosphate + ADP. It carries out the reaction a ribonucleoside 5'-diphosphate + ATP = a ribonucleoside 5'-triphosphate + ADP. Nucleoside monophosphate (NMP) kinase that catalyzes the reversible transfer of the terminal phosphate group between nucleoside triphosphates and monophosphates. Active on AMP and dAMP with ATP as a donor. When GTP is used as phosphate donor, the enzyme phosphorylates AMP, CMP, and to a small extent dCMP. Also displays broad nucleoside diphosphate kinase activity. The sequence is that of Adenylate kinase isoenzyme 5 (AK5) from Homo sapiens (Human).